The chain runs to 956 residues: Plasma membrane ATPase 1 (956 aa).

The Cytoplasmic segment spans residues 1 to 65 (MAEKPEVLDA…EKKESKFLKF (65 aa)). The helical transmembrane segment at 66–85 (LGFMWNPLSWVMEAAAIMAI) threads the bilayer. Residues 86-97 (ALANGGGKPPDW) are Extracellular-facing. Residues 98 to 118 (QDFVGIITLLIINSTISFIEE) form a helical membrane-spanning segment. Topologically, residues 119-247 (NNAGNAAAAL…GHFQKVLTAI (129 aa)) are cytoplasmic. A helical membrane pass occupies residues 248–268 (GNFCICSIAVGMIIEIIVMYP). Residues 269 to 277 (IQHRKYRPG) are Extracellular-facing. The chain crosses the membrane as a helical span at residues 278–295 (IDNLLVLLIGGIPIAMPT). The Cytoplasmic segment spans residues 296 to 646 (VLSVTMAIGS…LTSRAIFQRM (351 aa)). The active-site 4-aspartylphosphate intermediate is aspartate 333. Mg(2+)-binding residues include aspartate 592 and aspartate 596. A helical membrane pass occupies residues 647-666 (KNYTIYAVSITIRIVLGFML). Over 667-674 (LALIWKFD) the chain is Extracellular. Residues 675–697 (FPPFMVLIIAILNDGTIMTISKD) traverse the membrane as a helical segment. The Cytoplasmic portion of the chain corresponds to 698-713 (RVKPSPLPDSWKLAEI). The chain crosses the membrane as a helical span at residues 714 to 734 (FTTGVVLGGYLAMMTVIFFWA). Residues 735-759 (AYKTNFFPRIFGVSTLEKTATDDFR) lie on the Extracellular side of the membrane. A helical transmembrane segment spans residues 760–780 (KLASAIYLQVSTISQALIFVT). The Cytoplasmic portion of the chain corresponds to 781–792 (RSRSWSFVERPG). The helical transmembrane segment at 793–813 (LLLVFAFFVAQLVATLIAVYA) threads the bilayer. At 814–821 (NWSFAAIE) the chain is on the extracellular side. Residues 822-842 (GIGWGWAGVIWLYNIVTYIPL) form a helical membrane-spanning segment. The Cytoplasmic portion of the chain corresponds to 843–956 (DLIKFLIRYA…IETIQQSYTV (114 aa)).

The protein belongs to the cation transport ATPase (P-type) (TC 3.A.3) family. Type IIIA subfamily. As to quaternary structure, possibly exists as a homodimer or a homotrimer.

It localises to the cell membrane. It catalyses the reaction ATP + H2O + H(+)(in) = ADP + phosphate + 2 H(+)(out). Functionally, the plasma membrane ATPase of plants and fungi is a hydrogen ion pump. The proton gradient it generates drives the active transport of nutrients by H(+)-symport. The resulting external acidification and/or internal alkinization may mediate growth responses. The protein is Plasma membrane ATPase 1 (LHA1) of Solanum lycopersicum (Tomato).